Here is a 508-residue protein sequence, read N- to C-terminus: Beta-glucosidase 10 (508 aa).

The N-terminal stretch at 1–22 is a signal peptide; sequence MKLYSLLSVFLVILLATSDSDA. Residues Gln-42, His-142, and 187–188 contribute to the a beta-D-glucoside site; that span reads NE. The Proton donor role is filled by Glu-188. A disulfide bridge links Cys-207 with Cys-215. Residues Asn-214 and Asn-219 are each glycosylated (N-linked (GlcNAc...) asparagine). An a beta-D-glucoside-binding site is contributed by Tyr-331. N-linked (GlcNAc...) asparagine glycosylation occurs at Asn-365. Glu-398 serves as a coordination point for a beta-D-glucoside. Catalysis depends on Glu-398, which acts as the Nucleophile. Asn-431 carries an N-linked (GlcNAc...) asparagine glycan. The a beta-D-glucoside site is built by Trp-441 and Phe-457. Residues Asn-463, Asn-485, and Asn-501 are each glycosylated (N-linked (GlcNAc...) asparagine).

Belongs to the glycosyl hydrolase 1 family.

It catalyses the reaction Hydrolysis of terminal, non-reducing beta-D-glucosyl residues with release of beta-D-glucose.. This Arabidopsis thaliana (Mouse-ear cress) protein is Beta-glucosidase 10.